The following is a 509-amino-acid chain: Maturase K (509 aa).

This sequence belongs to the intron maturase 2 family. MatK subfamily.

The protein localises to the plastid. It localises to the chloroplast. In terms of biological role, usually encoded in the trnK tRNA gene intron. Probably assists in splicing its own and other chloroplast group II introns. The chain is Maturase K from Avicennia marina (Grey mangrove).